A 652-amino-acid chain; its full sequence is MSRFNPSPVSLSVTLGLMFSASAFAQDATKTDETMVVTAAGYAQVIQNAPASISVISREDLESRYYRDVTDALKSVPGVTVTGGGDTTDISIRGMGSNYTLILVDGKRQTSRQTRPNSDGPGIEQGWLPPLQAIERIEVIRGPMSTLYGSDAIGGVINIITRKDQQQWSGNVQLSTVVQENRASGDEQSANFFVTGPLSDALSLQVYGQTTQRDEDEIEHGYGDKSLRSLTSKLNYQLNPDHQLQLEAGVSAQDRENNVGKSAQSSGCRGTCSNTDNQYRRNHVAVSHQGDWQGVGQSDTYLQYEENTNKSREMSIDNTVFKSTLVAPIGEHMLSFGVEGKHESLEDKTSNKISSRTHISNTQWAGFIEDEWALAEQFRLTFGGRLDHDKNYGSHFSPRVYGVWNLDPLWTVKGGVSTGFRAPQLREVTPDWGQVSGGGNIYGNPDLQPETSINKELSLMYSTGSGLAASLTAFHNDFKDKITRVACPANICTAGPNQWGATPTYRVNIDEAETYGAEATLSLPITESVELSSSYTYTHSEQKSGNFAGRPLLQLPKHLFNANLSWQTTDRLNSWANLNYRGKEMQPEGGASNDDFIAPSYTFIDTGVTYALTDTATIKAAVYNLFDQEVNYAEYGYVEDGRRYWLGLDIAF.

Positions 1–25 (MSRFNPSPVSLSVTLGLMFSASAFA) are cleaved as a signal peptide. A TonB box motif is present at residues 33 to 40 (ETMVVTAA). The region spanning 45 to 162 (VIQNAPASIS…IGGVINIITR (118 aa)) is the TBDR plug domain. The 486-residue stretch at 167-652 (QWSGNVQLST…RYWLGLDIAF (486 aa)) folds into the TBDR beta-barrel domain. The short motif at 635 to 652 (YGYVEDGRRYWLGLDIAF) is the TonB C-terminal box element.

The protein belongs to the TonB-dependent receptor family.

The protein localises to the cell outer membrane. In terms of biological role, involved in the initial step of iron uptake by binding ferric vibriobactin, an iron chelatin siderophore that allows V.cholerae to extract iron from the environment. This chain is Iron-regulated outer membrane virulence protein (irgA), found in Vibrio cholerae serotype O1 (strain ATCC 39541 / Classical Ogawa 395 / O395).